A 153-amino-acid polypeptide reads, in one-letter code: 3-hydroxyacyl-[acyl-carrier-protein] dehydratase FabZ (153 aa).

H58 is an active-site residue.

This sequence belongs to the thioester dehydratase family. FabZ subfamily.

It is found in the cytoplasm. The catalysed reaction is a (3R)-hydroxyacyl-[ACP] = a (2E)-enoyl-[ACP] + H2O. Functionally, involved in unsaturated fatty acids biosynthesis. Catalyzes the dehydration of short chain beta-hydroxyacyl-ACPs and long chain saturated and unsaturated beta-hydroxyacyl-ACPs. In Bradyrhizobium diazoefficiens (strain JCM 10833 / BCRC 13528 / IAM 13628 / NBRC 14792 / USDA 110), this protein is 3-hydroxyacyl-[acyl-carrier-protein] dehydratase FabZ.